The primary structure comprises 284 residues: Tropomyosin alpha-1 chain (284 aa).

Position 1 is an N-acetylmethionine (Met-1). The tract at residues 1-38 (MDAIKKKMQMLKLDKENALDRAEQAEADKKAAEDRSKQ) is disordered. Positions 1 to 284 (MDAIKKKMQM…DHALNDMTSI (284 aa)) form a coiled coil. The span at 12–38 (KLDKENALDRAEQAEADKKAAEDRSKQ) shows a compositional bias: basic and acidic residues. Residues Ala-31, Ser-45, and Lys-51 each carry the phosphoserine modification. A disordered region spans residues 116-136 (AEKAADESERGMKVIESRAQK). Residues Ser-174, Ser-186, and Ser-206 each carry the phosphoserine modification. Lys-213 carries the N6-acetyllysine modification. The residue at position 252 (Ser-252) is a Phosphoserine. Tyr-261 is modified (phosphotyrosine). Residue Ser-271 is modified to Phosphoserine. Ser-283 carries the phosphoserine; by DAPK1 modification.

This sequence belongs to the tropomyosin family. As to quaternary structure, homodimer. Heterodimer of an alpha (TPM1, TPM3 or TPM4) and a beta (TPM2) chain. Interacts with HRG (via the HRR domain); the interaction contributes to the antiangiogenic properties of the histidine/proline-rich region (HRR) of HRG. Interacts (via N-terminus) with LMOD2 (via N-terminus) and TMOD1 (via N-terminus). Post-translationally, phosphorylated at Ser-283 by DAPK1 in response to oxidative stress and this phosphorylation enhances stress fiber formation in endothelial cells. Detected in primary breast cancer tissues but undetectable in normal breast tissues in Sudanese patients. Isoform 1 is expressed in adult and fetal skeletal muscle and cardiac tissues, with higher expression levels in the cardiac tissues. Isoform 10 is expressed in adult and fetal cardiac tissues, but not in skeletal muscle.

It is found in the cytoplasm. Its subcellular location is the cytoskeleton. Its function is as follows. Binds to actin filaments in muscle and non-muscle cells. Plays a central role, in association with the troponin complex, in the calcium dependent regulation of vertebrate striated muscle contraction. Smooth muscle contraction is regulated by interaction with caldesmon. In non-muscle cells is implicated in stabilizing cytoskeleton actin filaments. The polypeptide is Tropomyosin alpha-1 chain (TPM1) (Homo sapiens (Human)).